The sequence spans 725 residues: mRNA decay activator protein ZFP36L3 (725 aa).

Low complexity predominate over residues 1-25 (MANNNLNRPLNTNVADSSNSSSTPG). The segment at 1–119 (MANNNLNRPL…KVSGSSSLAT (119 aa)) is disordered. Composition is skewed to polar residues over residues 42–72 (APSS…QSGA) and 100–119 (HSLQ…SLAT). 2 consecutive C3H1-type zinc fingers follow at residues 122 to 150 (RYKT…HGYR) and 160 to 188 (KYKT…HNQP). The necessary for cytoplasmic localization stretch occupies residues 193–711 (VLSESTLEEP…ESEFDNTNSS (519 aa)). The disordered stretch occupies residues 276–310 (STTAHDADKDPDKDADKDPSNNSANDALAFPQEPG). Over residues 280 to 294 (HDADKDPDKDADKDP) the composition is skewed to basic and acidic residues. 4 consecutive transmembrane segments (helical) span residues 380–400 (LAPA…AMAL), 420–440 (AALA…GAAM), 441–461 (APGA…MATG), and 468–488 (AAMA…GAAV). A disordered region spans residues 686-709 (DEDDFLRRSSSSSSLNESEFDNTN). Residues 693–702 (RSSSSSSLNE) are compositionally biased toward low complexity.

As to expression, expressed in placenta and extraembryonic tissues (at protein level). Not detected in embryos and fetus.

The protein localises to the cytoplasm. The protein resides in the membrane. Functionally, placenta-specific zinc-finger RNA-binding protein that destabilizes cytoplasmic AU-rich element (ARE)-containing mRNA transcripts by promoting their poly(A) tail removal or deadenylation, and hence provide a mechanism for attenuating protein synthesis. Binds to the 3'-UTR ARE of placental target mRNAs, such as TNF, HBEGF and LIPG. Involved in placental expression of many genes important for normal placental physiology. In Mus musculus (Mouse), this protein is mRNA decay activator protein ZFP36L3.